The sequence spans 326 residues: Light-induced protein, chloroplastic (326 aa).

The N-terminal 63 residues, 1–63 (MASISSLNQI…TNPKPKFTAQ (63 aa)), are a transit peptide targeting the chloroplast.

The protein belongs to the LIPC family. As to quaternary structure, associates with the major light-harvesting antenna complex polypeptides of the PSII oxygen-evolving complex. As to expression, expressed in leaves.

The protein resides in the plastid. Its subcellular location is the chloroplast thylakoid membrane. Required for normal plant growth. May be both photoprotective and play an ancillary role in photosynthesis. May structurally stabilize thylakoids during osmotic and oxidative stress. This chain is Light-induced protein, chloroplastic, found in Solanum tuberosum (Potato).